The chain runs to 496 residues: Cytochrome P450 71D179 (496 aa).

A helical; Signal-anchor for type II membrane protein transmembrane segment spans residues 1-21; sequence MDISISWVVIIVSVLSYLILM. C435 provides a ligand contact to heme.

It belongs to the cytochrome P450 family. Heme serves as cofactor.

The protein resides in the membrane. Its pathway is secondary metabolite biosynthesis; terpenoid biosynthesis. Functionally, involved in the biosynthesis of phenolic monoterpenes natural products thymol and carvacrol which have a broad range of biological activities acting as antimicrobial compounds, insecticides, antioxidants and pharmaceutical agents. Catalyzes probably the C3-hydroxylation of gamma-terpinene to produce thymol. In Thymus vulgaris (Thyme), this protein is Cytochrome P450 71D179.